The chain runs to 498 residues: MKKVSTLDLLFVAIMGVSPAAFAADLIDVSKLPSKAAQGAPGPVTLQAAVGAGGADELKAIRSTTLPNGKQVTRYEQFHNGVRVVGEAITEVKGPGKSVAAQRSGHFVANIAADLPGSTTAAVSAEQVLAQAKSLKAQGRKTENDKVELVIRLGENNIAQLVYNVSYLIPGEGLSRPHFVIDAKTGEVLDQWEGLAHAEAGGPGGNQKIGKYTYGSDYGPLIVNDRCEMDDGNVITVDMNSSTDDSKTTPFRFACPTNTYKQVNGAYSPLNDAHFFGGVVFKLYRDWFGTSPLTHKLYMKVHYGRSVENAYWDGTAMLFGDGATMFYPLVSLDVAAHEVSHGFTEQNSGLIYRGQSGGMNEAFSDMAGEAAEFYMRGKNDFLIGYDIKKGSGALRYMDQPSRDGRSIDNASQYYNGIDVHHSSGVYNRAFYLLANSPGWDTRKAFEVFVDANRYYWTATSNYNSGACGVIRSAQNRNYSAADVTRAFSTVGVTCPSAL.

An N-terminal signal peptide occupies residues 1–23 (MKKVSTLDLLFVAIMGVSPAAFA). Positions 24 to 197 (ADLIDVSKLP…VLDQWEGLAH (174 aa)) are excised as a propeptide. Cys227 and Cys255 are disulfide-bonded. Ca(2+) is bound at residue Asp333. Zn(2+) is bound at residue His337. Residue Glu338 is part of the active site. Zn(2+) is bound by residues His341 and Glu361. Glu369, Glu372, Asp380, and Leu382 together coordinate Ca(2+). Catalysis depends on His420, which acts as the Proton donor. Residues Cys467 and Cys494 are joined by a disulfide bond.

The protein belongs to the peptidase M4 family. In terms of assembly, monomer. The cofactor is Ca(2+). It depends on Zn(2+) as a cofactor. In terms of processing, made as a membrane-associated pre-pro-protein, which is exported to the periplasm (yielding pro-elastase) with removal of the signal peptide. Under certain conditions pro-elastase can accumulate. The pro-peptide is removed in the periplasm yielding a (mature length) 33 kDa protein, probably by autocatalysis. The pro-peptide probably remains associated with elastase and can be secreted. Further alterations (perhaps processing) seems to be required before secretion into the extracellular space.

The protein localises to the secreted. It catalyses the reaction Hydrolysis of proteins including elastin, collagen types III and IV, fibronectin and immunoglobulin A, generally with bulky hydrophobic group at P1'. Insulin B chain cleavage pattern identical to that of thermolysin, but specificity differs in other respects.. Inhibited by phosphoramidon. Its function is as follows. Cleaves host elastin, collagen, IgG, and several complement components as well as endogenous pro-aminopeptidase. Autocatalyses processing of its pro-peptide. Processes the pro-peptide of pro-chitin-binding protein (cbpD). Involved in the pathogenesis of P.aeruginosa infections. The polypeptide is Elastase (lasB) (Pseudomonas aeruginosa (strain ATCC 15692 / DSM 22644 / CIP 104116 / JCM 14847 / LMG 12228 / 1C / PRS 101 / PAO1)).